A 376-amino-acid polypeptide reads, in one-letter code: MSLFGALMGDFDDDLGLMNNHMNHTMNAMNMQMRSMNRLMNSFMPDPFMQVSPFDQGFQQNALMERPQMPAMPAMGLFGMPMMPNFNRLLNADIGGNSGASFCQSTVMTMSSGPDGRPQIYQASTSTKTGPGGVRETRRTVQDSRTGVKKMAIGHHIGERAHIIEKEQDMRSGQLEERQEFINLEEGEAEQFDREFTSRASRGAVQSRHHAGGMQAIMPARPAAHTSTLTIEPVEDDDDDDDDCVIQEQQPVRSSAGRHYSSAPTAPQNSGNIATAAAPTPTSSPTTYDTSNGNNNNYVSSRRSYLRNGHGHSLATPRRPLRTPPSSPLATVSTSPSIHPHPYAANPRRQQRAVKHFHTEDEAASSYKAVKRGKKK.

Positions 96 to 202 (GNSGASFCQS…DREFTSRASR (107 aa)) are interaction with DREF. Disordered regions lie at residues 124 to 147 (STST…SRTG), 187 to 224 (GEAE…RPAA), and 250 to 376 (QPVR…GKKK). Positions 262-273 (SAPTAPQNSGNI) are enriched in polar residues. The segment covering 274-318 (ATAAAPTPTSSPTTYDTSNGNNNNYVSSRRSYLRNGHGHSLATPR) has biased composition (low complexity). Threonine 323 is modified (phosphothreonine).

The protein belongs to the MLF family. As to quaternary structure, interacts with DRE-binding factor Dref. In terms of tissue distribution, expressed at high levels in unfertilized eggs, early embryos, pupae and adult males while a low level expression is found in adult females and larvae.

It localises to the cytoplasm. The polypeptide is Myeloid leukemia factor (Mlf) (Drosophila melanogaster (Fruit fly)).